A 222-amino-acid chain; its full sequence is Pre-mRNA cleavage factor Im 25 kDa subunit 1 (222 aa).

The Nudix hydrolase domain maps to 67–194 (GLRTCVEAVL…KLLAVPLCQL (128 aa)). Positions 94–96 (SIF) are interaction with RNA. A Nudix box motif is present at residues 101 to 122 (GRLRPGESDIEGLKRKLASKLS).

It belongs to the Nudix hydrolase family. CPSF5 subfamily. In terms of assembly, homodimer. Component of the cleavage factor Im (CFIm) complex. Forms a complex with cleavage and polyadenylation specificity factor (CPSF) subunits FIPS5.

The protein resides in the nucleus. Component of the cleavage factor Im (CFIm) complex that plays a key role in pre-mRNA 3'-processing. Involved in association with CPSF6 or CPSF7 in pre-MRNA 3'-end poly(A) site cleavage and poly(A) addition. NUDT21/CPSF5 binds to cleavage and polyadenylation RNA substrates. The homodimer mediates simultaneous sequence-specific recognition of two 5'-UGUA-3' elements within the pre-mRNA. Binds to, but does not hydrolyze mono- and di-adenosine nucleotides. May have a role in mRNA export. The protein is Pre-mRNA cleavage factor Im 25 kDa subunit 1 of Arabidopsis thaliana (Mouse-ear cress).